A 303-amino-acid polypeptide reads, in one-letter code: Methionyl-tRNA formyltransferase (303 aa).

111-114 contributes to the (6S)-5,6,7,8-tetrahydrofolate binding site; the sequence is SLLP.

Belongs to the Fmt family.

The enzyme catalyses L-methionyl-tRNA(fMet) + (6R)-10-formyltetrahydrofolate = N-formyl-L-methionyl-tRNA(fMet) + (6S)-5,6,7,8-tetrahydrofolate + H(+). In terms of biological role, attaches a formyl group to the free amino group of methionyl-tRNA(fMet). The formyl group appears to play a dual role in the initiator identity of N-formylmethionyl-tRNA by promoting its recognition by IF2 and preventing the misappropriation of this tRNA by the elongation apparatus. This Ehrlichia canis (strain Jake) protein is Methionyl-tRNA formyltransferase.